Consider the following 198-residue polypeptide: Probable nicotinate-nucleotide adenylyltransferase (198 aa).

The protein belongs to the NadD family.

The enzyme catalyses nicotinate beta-D-ribonucleotide + ATP + H(+) = deamido-NAD(+) + diphosphate. It functions in the pathway cofactor biosynthesis; NAD(+) biosynthesis; deamido-NAD(+) from nicotinate D-ribonucleotide: step 1/1. Its function is as follows. Catalyzes the reversible adenylation of nicotinate mononucleotide (NaMN) to nicotinic acid adenine dinucleotide (NaAD). The polypeptide is Probable nicotinate-nucleotide adenylyltransferase (Chlorobium limicola (strain DSM 245 / NBRC 103803 / 6330)).